The following is a 195-amino-acid chain: Putative NADH dehydrogenase/NAD(P)H nitroreductase RSc1004 (195 aa).

Belongs to the nitroreductase family. HadB/RutE subfamily. The cofactor is FMN.

This chain is Putative NADH dehydrogenase/NAD(P)H nitroreductase RSc1004, found in Ralstonia nicotianae (strain ATCC BAA-1114 / GMI1000) (Ralstonia solanacearum).